We begin with the raw amino-acid sequence, 558 residues long: MPATEKASAPHWSFLSSDVISIMKSNPSTLLLPLAALSLASCANPQKEETKRPNIIFMMTDDHTTQAMSCYGGNLIQTPNMDRIANEGIRFDNCYAVNALSGPSRACILTGKFSHENGFTDNASTFNGDQQTFPKLLQQAGYQTAMIGKWHLISEPQGFDHWSILSGQHEQGDYYDPDFWEDGKHIVEKGYATDIITDKAINFLENRDKNKPFCMMYHQKAPHRNWMPAPRHLGIFNNTIFPEPANLFDDYEGRGKAAREQDMSIEHTLTNDWDLKLLTREEMLKDTTNRLYSVYKRMPSEVQDKWDSAYAQRIAEYRKGDLKGKALISWKYQQYMRDYLATVLAVDENIGRLLNYLEKIGELDNTIIVYTSDQGFFLGEHGWFDKRFMYEECQRMPLIIRYPKAIKAGSTSSAISMNVDFAPTFLDFAGVEVPSDIQGASLKPVLENEGKTPADWRKAAYYHYYEYPAEHSVKRHYGIRTQDFKLIHFYNDIDEWEMYDMKADPREMNNIFGKAEYAKKQKELMQLLEETQKQYKDNDPDEKETVLFKGDRRLMENR.

The residue at position 101 (Ser101) is a 3-oxoalanine (Ser).

The protein belongs to the sulfatase family. Post-translationally, the conversion to 3-oxoalanine (also known as C-formylglycine, FGly), of a serine or cysteine residue in prokaryotes and of a cysteine residue in eukaryotes, is critical for catalytic activity.

In terms of biological role, exosulfatase involved in the degradation of the glycosaminoglycan (GAG) heparan sulfate (HS). Catalyzes the hydrolysis of the 6-sulfate groups of the N-acetyl-D-glucosamine 6-sulfate units. GAG-specific sulfatases play a key role in the persistence of the major human gut symbiont B.thetaiotaomicron in the host gastrointestinal tract. This is N-acetylglucosamine-6-O-sulfatase from Bacteroides thetaiotaomicron (strain ATCC 29148 / DSM 2079 / JCM 5827 / CCUG 10774 / NCTC 10582 / VPI-5482 / E50).